The primary structure comprises 239 residues: 7-cyano-7-deazaguanine synthase (239 aa).

7 to 17 lines the ATP pocket; the sequence is LSGGIDSSTLL. Positions 184, 192, 195, and 198 each coordinate Zn(2+).

Belongs to the QueC family. It depends on Zn(2+) as a cofactor.

The catalysed reaction is 7-carboxy-7-deazaguanine + NH4(+) + ATP = 7-cyano-7-deazaguanine + ADP + phosphate + H2O + H(+). It functions in the pathway purine metabolism; 7-cyano-7-deazaguanine biosynthesis. Its function is as follows. Catalyzes the ATP-dependent conversion of 7-carboxy-7-deazaguanine (CDG) to 7-cyano-7-deazaguanine (preQ(0)). In Archaeoglobus fulgidus (strain ATCC 49558 / DSM 4304 / JCM 9628 / NBRC 100126 / VC-16), this protein is 7-cyano-7-deazaguanine synthase.